A 451-amino-acid polypeptide reads, in one-letter code: METNQILETIRMIEEEKLDIRTITMGISLLDCMDGDGEAARKKIYQKIVTKARNLVAVGEAIESEFGIPIINKRISVTPIAIIAGSSADTDYVEFAKTLDAAAKEVGVNFIGGYSALVQKGYTKGDEILIRSIPQALAQTERVCSSVNVGSTRTGINMDAVRQMGEVIKETADLTADTQGLGCAKLVVFANAVEDNPFMAGAFHGVGEADCVINVGVSGPGVVKRAIEKVKGEPFDIVAETVKQTAFKITRMGQLVGQVASEKLGVPFGIVDLSLAPTPAIGDSVAHILEEMGLEMVGTHGTTAALALLNDAVKKGGVMACGHVGGLSGAFIPVSEDAGMIEAVQQGALNLEKLEAMTAICSVGLDMIAVPGDTTAETLAAMIADEAAIGVINNKTTAVRVIPASGTKVGDMVEFGGLLGTAPVMPVNGKSSVDFIARGGRIPAPIHSFKN.

Belongs to the UPF0210 family. In terms of assembly, homodimer.

The polypeptide is UPF0210 protein lmo0534 (Listeria monocytogenes serovar 1/2a (strain ATCC BAA-679 / EGD-e)).